The sequence spans 424 residues: Glutamyl-tRNA reductase (424 aa).

Substrate is bound by residues 53-56 (TCNR), Ser111, 116-118 (EPQ), and Gln122. Cys54 functions as the Nucleophile in the catalytic mechanism. 191-196 (GAGEMI) is an NADP(+) binding site.

The protein belongs to the glutamyl-tRNA reductase family. Homodimer.

The enzyme catalyses (S)-4-amino-5-oxopentanoate + tRNA(Glu) + NADP(+) = L-glutamyl-tRNA(Glu) + NADPH + H(+). Its pathway is porphyrin-containing compound metabolism; protoporphyrin-IX biosynthesis; 5-aminolevulinate from L-glutamyl-tRNA(Glu): step 1/2. Catalyzes the NADPH-dependent reduction of glutamyl-tRNA(Glu) to glutamate 1-semialdehyde (GSA). This is Glutamyl-tRNA reductase from Bordetella avium (strain 197N).